Consider the following 1138-residue polypeptide: Nonsense-mediated mRNA decay factor SMG7 (1138 aa).

An N-acetylserine modification is found at Ser2. 2 TPR repeats span residues 152–185 (QHCL…VPSN) and 187–219 (QPYN…KFPF). Disordered stretches follow at residues 515–612 (ATDG…LPSR), 649–745 (STAH…YQQA), 838–871 (QPNM…KSSP), 990–1090 (SLPA…PSME), and 1106–1138 (SSMM…NPPH). A Phosphoserine modification is found at Ser519. The span at 525–537 (VLSTGRNPSNSCD) shows a compositional bias: polar residues. Positions 548 to 582 (ENIKPREVNQGRSFPPKEVKSQTELRKTPVSEARK) are enriched in basic and acidic residues. At Thr575 the chain carries Phosphothreonine. Composition is skewed to polar residues over residues 584–597 (PVTQ…NSQF) and 649–673 (STAH…SQQR). Residues 674–721 (PSGPGPMNQGPQQSQPPSQPPLTSLPAQPTAQSTSQLQVQALAQQQQS) show a composition bias toward low complexity. Ser732 and Ser848 each carry phosphoserine. The segment covering 854 to 868 (PEQDPVPRMPFEDPK) has biased composition (basic and acidic residues). Over residues 990–999 (SLPASSDHST) the composition is skewed to polar residues. Residues 1000–1026 (PASQSPHSSNPSSLPSSPPTHNHNSAP) are compositionally biased toward low complexity. A compositionally biased stretch (basic and acidic residues) spans 1037 to 1051 (DNRDRRPADRWKTDK). Over residues 1063-1082 (SATSSSESSWHQASTPSGTW) the composition is skewed to polar residues. Low complexity predominate over residues 1118 to 1132 (QLLMQQKQKQQRGQG).

In terms of assembly, part of a complex that contains SMG5, SMG7, PPP2CA, a short isoform of UPF3A (isoform UPF3AS, but not isoform UPF3AL) and phosphorylated UPF1. Interacts with DHX34; the interaction is RNA-independent.

The protein localises to the cytoplasm. Its subcellular location is the nucleus. Functionally, plays a role in nonsense-mediated mRNA decay. Recruits UPF1 to cytoplasmic mRNA decay bodies. Together with SMG5 is thought to provide a link to the mRNA degradation machinery involving exonucleolytic pathways, and to serve as an adapter for UPF1 to protein phosphatase 2A (PP2A), thereby triggering UPF1 dephosphorylation. The protein is Nonsense-mediated mRNA decay factor SMG7 of Mus musculus (Mouse).